The following is a 79-amino-acid chain: Small ribosomal subunit protein bS21 (79 aa).

The segment at 59 to 79 (RKKMQREGLLPMKPKPVVGVR) is disordered.

This sequence belongs to the bacterial ribosomal protein bS21 family.

This Methylocella silvestris (strain DSM 15510 / CIP 108128 / LMG 27833 / NCIMB 13906 / BL2) protein is Small ribosomal subunit protein bS21.